A 124-amino-acid polypeptide reads, in one-letter code: Sulfur globule protein CV2 (124 aa).

The first 22 residues, 1–22 (MKKLATAAAVAALLGASASASA), serve as a signal peptide directing secretion.

As to quaternary structure, the protein envelope of the sulfur globules is composed of the three different proteins CV1, CV2 and CV3.

In terms of biological role, structural protein of the sulfur globules, which are intracellular globules that serve for sulfur storage in purple sulfur bacteria. The protein is Sulfur globule protein CV2 (sgpB) of Allochromatium vinosum (strain ATCC 17899 / DSM 180 / NBRC 103801 / NCIMB 10441 / D) (Chromatium vinosum).